Consider the following 62-residue polypeptide: Keratin-associated protein 6-2 (62 aa).

Belongs to the KRTAP type 6 family. Interacts with hair keratins.

In terms of biological role, in the hair cortex, hair keratin intermediate filaments are embedded in an interfilamentous matrix, consisting of hair keratin-associated proteins (KRTAP), which are essential for the formation of a rigid and resistant hair shaft through their extensive disulfide bond cross-linking with abundant cysteine residues of hair keratins. The matrix proteins include the high-sulfur and high-glycine-tyrosine keratins. The polypeptide is Keratin-associated protein 6-2 (KRTAP6-2) (Homo sapiens (Human)).